The primary structure comprises 262 residues: tRNA pseudouridine synthase A (262 aa).

The active-site Nucleophile is Asp-51. Residue Tyr-109 participates in substrate binding.

This sequence belongs to the tRNA pseudouridine synthase TruA family. As to quaternary structure, homodimer.

The catalysed reaction is uridine(38/39/40) in tRNA = pseudouridine(38/39/40) in tRNA. Its function is as follows. Formation of pseudouridine at positions 38, 39 and 40 in the anticodon stem and loop of transfer RNAs. The protein is tRNA pseudouridine synthase A of Actinobacillus pleuropneumoniae serotype 7 (strain AP76).